Here is a 254-residue protein sequence, read N- to C-terminus: MPTLKLIGLGLSAKFVTREAIDEISKCNVVLFESYTSLSCDINLDFIKFLNKNVIIVDRKFIENNIKEIIKLLKEKEDVCIVTIGDPMIATTHVSLIVEVKDKGYNFKVIPGISVHCYIISKSMLSSYKFGKSVTITYPYNNKIDTTPYDVIYDNFIRGLHTILYLDLKEDKIMTAKEAVELLIEMEKIKKQGLVSDDRIIIVGQRLGCDDEEVVALRLKEVFNYKFKEPPHIIVFPTDKLHFMEVEALKCLMK.

Residues leucine 11, aspartate 86, isoleucine 89, 114 to 115 (SV), leucine 166, leucine 207, and histidine 232 each bind S-adenosyl-L-methionine.

It belongs to the diphthine synthase family. As to quaternary structure, homodimer.

It carries out the reaction 2-[(3S)-amino-3-carboxypropyl]-L-histidyl-[translation elongation factor 2] + 3 S-adenosyl-L-methionine = diphthine-[translation elongation factor 2] + 3 S-adenosyl-L-homocysteine + 3 H(+). The protein operates within protein modification; peptidyl-diphthamide biosynthesis. In terms of biological role, S-adenosyl-L-methionine-dependent methyltransferase that catalyzes the trimethylation of the amino group of the modified target histidine residue in translation elongation factor 2 (EF-2), to form an intermediate called diphthine. The three successive methylation reactions represent the second step of diphthamide biosynthesis. The sequence is that of Diphthine synthase from Sulfurisphaera tokodaii (strain DSM 16993 / JCM 10545 / NBRC 100140 / 7) (Sulfolobus tokodaii).